Consider the following 469-residue polypeptide: Diacetylchitobiose binding protein NgcE (469 aa).

Positions 1 to 37 form a signal peptide, tat-type signal; the sequence is MTIRAGSLDRRTLLRGAIATAAMGSFAVACSSPSSED. The disordered stretch occupies residues 30 to 54; the sequence is CSSPSSEDKESDSGPKGEKSANNPF. Positions 35-48 are enriched in basic and acidic residues; it reads SEDKESDSGPKGEK.

This sequence belongs to the bacterial solute-binding protein 1 family. In terms of assembly, the complex is composed of two ATP-binding proteins (MsiK), two transmembrane proteins (NgcF and NgcG) and a solute-binding protein (NgcE). In terms of processing, predicted to be exported by the Tat system. The position of the signal peptide cleavage has not been experimentally proven.

Its subcellular location is the cell membrane. Its function is as follows. Part of the ABC transporter complex NgcEFG-MsiK involved in N,N'-diacetylchitobiose ((GlcNAc)2) uptake. Binds (GlcNAc)2. Can also bind GlcNAc. This chain is Diacetylchitobiose binding protein NgcE, found in Streptomyces coelicolor (strain ATCC BAA-471 / A3(2) / M145).